The sequence spans 614 residues: DNA ligase (614 aa).

Residues 29 to 33 (DQDYD) and 73 to 74 (SI) each bind NAD(+). The N6-AMP-lysine intermediate role is filled by lysine 111. Arginine 127, glutamate 158, and lysine 270 together coordinate NAD(+). Cysteine 358, cysteine 361, cysteine 374, and cysteine 380 together coordinate Zn(2+). A BRCT domain is found at 538-614 (TLTHELFDKK…MTETDYLSKI (77 aa)).

This sequence belongs to the NAD-dependent DNA ligase family. LigA subfamily. Mg(2+) serves as cofactor. The cofactor is Mn(2+).

It carries out the reaction NAD(+) + (deoxyribonucleotide)n-3'-hydroxyl + 5'-phospho-(deoxyribonucleotide)m = (deoxyribonucleotide)n+m + AMP + beta-nicotinamide D-nucleotide.. Its function is as follows. DNA ligase that catalyzes the formation of phosphodiester linkages between 5'-phosphoryl and 3'-hydroxyl groups in double-stranded DNA using NAD as a coenzyme and as the energy source for the reaction. It is essential for DNA replication and repair of damaged DNA. In Ruthia magnifica subsp. Calyptogena magnifica, this protein is DNA ligase.